The sequence spans 89 residues: Putative regulatory protein RBAM_015500 (89 aa).

This sequence belongs to the RemA family.

This chain is Putative regulatory protein RBAM_015500, found in Bacillus velezensis (strain DSM 23117 / BGSC 10A6 / LMG 26770 / FZB42) (Bacillus amyloliquefaciens subsp. plantarum).